We begin with the raw amino-acid sequence, 381 residues long: Queuine tRNA-ribosyltransferase (381 aa).

The active-site Proton acceptor is D96. Residues D96–F100, D150, Q193, and G220 each bind substrate. An RNA binding region spans residues G251 to S257. D270 serves as the catalytic Nucleophile. An RNA binding; important for wobble base 34 recognition region spans residues T275–R279. The Zn(2+) site is built by C308, C310, C313, and H339.

It belongs to the queuine tRNA-ribosyltransferase family. In terms of assembly, homodimer. Within each dimer, one monomer is responsible for RNA recognition and catalysis, while the other monomer binds to the replacement base PreQ1. Requires Zn(2+) as cofactor.

It catalyses the reaction 7-aminomethyl-7-carbaguanine + guanosine(34) in tRNA = 7-aminomethyl-7-carbaguanosine(34) in tRNA + guanine. It functions in the pathway tRNA modification; tRNA-queuosine biosynthesis. Catalyzes the base-exchange of a guanine (G) residue with the queuine precursor 7-aminomethyl-7-deazaguanine (PreQ1) at position 34 (anticodon wobble position) in tRNAs with GU(N) anticodons (tRNA-Asp, -Asn, -His and -Tyr). Catalysis occurs through a double-displacement mechanism. The nucleophile active site attacks the C1' of nucleotide 34 to detach the guanine base from the RNA, forming a covalent enzyme-RNA intermediate. The proton acceptor active site deprotonates the incoming PreQ1, allowing a nucleophilic attack on the C1' of the ribose to form the product. After dissociation, two additional enzymatic reactions on the tRNA convert PreQ1 to queuine (Q), resulting in the hypermodified nucleoside queuosine (7-(((4,5-cis-dihydroxy-2-cyclopenten-1-yl)amino)methyl)-7-deazaguanosine). The chain is Queuine tRNA-ribosyltransferase from Lysinibacillus sphaericus (strain C3-41).